A 715-amino-acid polypeptide reads, in one-letter code: Polyribonucleotide nucleotidyltransferase (715 aa).

Residues Asp488 and Asp494 each coordinate Mg(2+). The 60-residue stretch at 555–614 (PKIETIKIPVDKIREVIGSGGKVIREIVEKTGAKIDIGEDGTIKIAAAEQTKIDAAKEWI) folds into the KH domain. In terms of domain architecture, S1 motif spans 624-692 (GQIYTGKVVK…DRGKTRLSMK (69 aa)). Residues 692-715 (KVVDQETGEDLSKSNEKAEEPADA) are disordered. Residues 701–715 (DLSKSNEKAEEPADA) are compositionally biased toward basic and acidic residues.

This sequence belongs to the polyribonucleotide nucleotidyltransferase family. Requires Mg(2+) as cofactor.

The protein localises to the cytoplasm. It carries out the reaction RNA(n+1) + phosphate = RNA(n) + a ribonucleoside 5'-diphosphate. Its function is as follows. Involved in mRNA degradation. Catalyzes the phosphorolysis of single-stranded polyribonucleotides processively in the 3'- to 5'-direction. The sequence is that of Polyribonucleotide nucleotidyltransferase from Phenylobacterium zucineum (strain HLK1).